A 185-amino-acid chain; its full sequence is Elongation factor P (185 aa).

It belongs to the elongation factor P family.

The protein localises to the cytoplasm. It functions in the pathway protein biosynthesis; polypeptide chain elongation. Functionally, involved in peptide bond synthesis. Stimulates efficient translation and peptide-bond synthesis on native or reconstituted 70S ribosomes in vitro. Probably functions indirectly by altering the affinity of the ribosome for aminoacyl-tRNA, thus increasing their reactivity as acceptors for peptidyl transferase. In Thermotoga maritima (strain ATCC 43589 / DSM 3109 / JCM 10099 / NBRC 100826 / MSB8), this protein is Elongation factor P (efp).